Reading from the N-terminus, the 580-residue chain is Benzoate--CoA ligase, peroxisomal (580 aa).

The Microbody targeting signal motif lies at 578–580 (SRL).

The protein belongs to the ATP-dependent AMP-binding enzyme family.

It is found in the peroxisome. The catalysed reaction is benzoate + ATP + CoA = benzoyl-CoA + AMP + diphosphate. Functionally, benzoate--CoA ligase involved in benzoyloxyglucosinolate biosynthesis in seeds. Glucosinolates are secondary metabolites involved in pathogen and insect defense of cruciferous plants. In Arabidopsis thaliana (Mouse-ear cress), this protein is Benzoate--CoA ligase, peroxisomal (AAE20).